The chain runs to 149 residues: MQRQTGHMEDKKRTGLESQGTENAFSDGRDGKDGLLHEGINEPILIPSTIADLEGIRELVRKFRGRLLPFEKCPDFCLRIGGLEASFHKGQEELLEYCEALYLPQPVKMEIVGIVDDVPGGENLPCSIAVDTIKSRHHGSLLTFFSHYH.

Positions 1-15 are enriched in basic and acidic residues; the sequence is MQRQTGHMEDKKRTG. The interval 1-32 is disordered; sequence MQRQTGHMEDKKRTGLESQGTENAFSDGRDGK.

This is an uncharacterized protein from Gallus gallus (Chicken).